Reading from the N-terminus, the 369-residue chain is Ribonuclease D (369 aa).

The 3'-5' exonuclease domain maps to 1 to 166 (MITTNDALAA…PIAHKLMEQV (166 aa)). The HRDC domain maps to 206-285 (RPRQLACLKL…AQAQALLEDA (80 aa)).

The protein belongs to the RNase D family. The cofactor is a divalent metal cation.

Its subcellular location is the cytoplasm. It carries out the reaction Exonucleolytic cleavage that removes extra residues from the 3'-terminus of tRNA to produce 5'-mononucleotides.. Exonuclease involved in the 3' processing of various precursor tRNAs. Initiates hydrolysis at the 3'-terminus of an RNA molecule and releases 5'-mononucleotides. The protein is Ribonuclease D of Cronobacter turicensis (strain DSM 18703 / CCUG 55852 / LMG 23827 / z3032).